The following is an 814-amino-acid chain: DNA topoisomerase 1 (814 aa).

The segment covering methionine 1–serine 12 has biased composition (low complexity). Positions methionine 1–aspartate 180 are disordered. The segment covering isoleucine 13–serine 22 has biased composition (basic residues). Phosphoserine occurs at positions 52, 54, and 136. The residue at position 138 (threonine 138) is a Phosphothreonine. 3 interaction with DNA regions span residues lysine 404–tyrosine 405, arginine 467–lysine 472, and serine 559–lysine 561. The region spanning glycine 411–tryptophan 814 is the Topo IB-type catalytic domain. The active-site O-(3'-phospho-DNA)-tyrosine intermediate is the tyrosine 773.

This sequence belongs to the type IB topoisomerase family. In terms of assembly, monomer.

It catalyses the reaction ATP-independent breakage of single-stranded DNA, followed by passage and rejoining.. Releases the supercoiling and torsional tension of DNA introduced during the DNA replication and transcription by transiently cleaving and rejoining one strand of the DNA duplex. Introduces a single-strand break via transesterification at a target site in duplex DNA. The scissile phosphodiester is attacked by the catalytic tyrosine of the enzyme, resulting in the formation of a DNA-(3'-phosphotyrosyl)-enzyme intermediate and the expulsion of a 5'-OH DNA strand. TThe free DNA strand then rotates around the intact phosphodiester bond on the opposing strand, thus removing DNA supercoils. Finally, in the religation step, the DNA 5'-OH attacks the covalent intermediate to expel the active-site tyrosine and restore the DNA phosphodiester backbone. This is DNA topoisomerase 1 (top1) from Schizosaccharomyces pombe (strain 972 / ATCC 24843) (Fission yeast).